The following is a 45-amino-acid chain: Photosystem II reaction center protein K (45 aa).

A propeptide spanning residues 1–8 is cleaved from the precursor; that stretch reads MEAVLLLA. The helical transmembrane segment at 24–44 threads the bilayer; sequence MPVIPLFFLALAFVWQAAVGF.

Belongs to the PsbK family. As to quaternary structure, PSII is composed of 1 copy each of membrane proteins PsbA, PsbB, PsbC, PsbD, PsbE, PsbF, PsbH, PsbI, PsbJ, PsbK, PsbL, PsbM, PsbT, PsbX, PsbY, PsbZ, Psb30/Ycf12, peripheral proteins PsbO, CyanoQ (PsbQ), PsbU, PsbV and a large number of cofactors. It forms dimeric complexes.

The protein localises to the cellular thylakoid membrane. In terms of biological role, one of the components of the core complex of photosystem II (PSII). PSII is a light-driven water:plastoquinone oxidoreductase that uses light energy to abstract electrons from H(2)O, generating O(2) and a proton gradient subsequently used for ATP formation. It consists of a core antenna complex that captures photons, and an electron transfer chain that converts photonic excitation into a charge separation. The polypeptide is Photosystem II reaction center protein K (Acaryochloris marina (strain MBIC 11017)).